The primary structure comprises 368 residues: MHSYQLLGLAAVGSLVSAAPAPSRVSEFAKKASTCTFTSASEASESISSCSDVVLSSIEVPAGETLDLSDAADGSTITFEGTTSFGYKEWKGPLIRFGGKDLTVTMADGAVIDGDGSRWWDSKGTNGGKTKPKFMYIHDVEDSTFKGINIKNTPVQAISVQATNVHLNDFTIDNSDGDDNGGHNTDGFDISESTGVYISGATVKNQDDCIAINSGESISFTGGTCSGGHGLSIGSVGGRDDNTVKNVTISDSTVSNSANGVRIKTIYKETGDVSEITYSNIQLSGITDYGIVIEQDYENGSPTGTPSTGIPITDVTVDGVTGTLEDDATQVYILCGDGSCSDWTWSGVDLSGGKTSDKCENVPSGASC.

An N-terminal signal peptide occupies residues 1–18; the sequence is MHSYQLLGLAAVGSLVSA. A propeptide spanning residues 19–31 is cleaved from the precursor; it reads APAPSRVSEFAKK. A disulfide bridge connects residues Cys35 and Cys50. 3 PbH1 repeats span residues 140 to 161, 162 to 192, and 193 to 214; these read VEDS…ISVQ, ATNV…DISE, and STGV…AINS. The Proton donor role is filled by Asp207. Cys209 and Cys225 are oxidised to a cystine. His229 is an active-site residue. PbH1 repeat units lie at residues 244–265, 273–295, and 307–352; these read VKNV…RIKT, VSEI…VIEQ, and STGI…DLSG. Asn246 carries an N-linked (GlcNAc...) asparagine glycan. 2 disulfides stabilise this stretch: Cys335–Cys340 and Cys359–Cys368.

Belongs to the glycosyl hydrolase 28 family.

Its subcellular location is the secreted. It carries out the reaction (1,4-alpha-D-galacturonosyl)n+m + H2O = (1,4-alpha-D-galacturonosyl)n + (1,4-alpha-D-galacturonosyl)m.. Functionally, involved in maceration and soft-rotting of plant tissue. Hydrolyzes the 1,4-alpha glycosidic bonds of de-esterified pectate in the smooth region of the plant cell wall. The protein is Probable endopolygalacturonase I (pgaI) of Aspergillus niger (strain ATCC MYA-4892 / CBS 513.88 / FGSC A1513).